The sequence spans 330 residues: Copper-containing nitrite reductase (330 aa).

2 consecutive Plastocyanin-like domains span residues 1–165 and 166–330; these read GLPR…YDRV and YTIG…PGPA. 7 residues coordinate Cu cation: histidine 85, histidine 90, histidine 125, cysteine 126, histidine 135, methionine 140, and histidine 296.

Belongs to the multicopper oxidase family. As to quaternary structure, homotrimer. It depends on Cu(2+) as a cofactor. Cu(+) is required as a cofactor. FAD serves as cofactor.

It is found in the periplasm. It carries out the reaction nitric oxide + Fe(III)-[cytochrome c] + H2O = Fe(II)-[cytochrome c] + nitrite + 2 H(+). It participates in nitrogen metabolism; nitrate reduction (denitrification); dinitrogen from nitrate: step 2/4. The polypeptide is Copper-containing nitrite reductase (nirK) (Alcaligenes xylosoxydans xylosoxydans (Achromobacter xylosoxidans)).